The primary structure comprises 850 residues: Bifunctional uridylyltransferase/uridylyl-removing enzyme (850 aa).

The segment at 1–317 is uridylyltransferase; the sequence is MSARPFADLR…LFPVVAPPLP (317 aa). A uridylyl-removing region spans residues 318–673; sequence IDDDFQLRAG…ARLSPAGEGI (356 aa). Residues 436-558 form the HD domain; sequence VDEHILTVLR…VGDTRRLDAL (123 aa). ACT domains follow at residues 674 to 755 and 783 to 850; these read QVMV…AVQP and VLSI…GVLG.

It belongs to the GlnD family. It depends on Mg(2+) as a cofactor.

It catalyses the reaction [protein-PII]-L-tyrosine + UTP = [protein-PII]-uridylyl-L-tyrosine + diphosphate. The catalysed reaction is [protein-PII]-uridylyl-L-tyrosine + H2O = [protein-PII]-L-tyrosine + UMP + H(+). With respect to regulation, uridylyltransferase (UTase) activity is inhibited by glutamine, while glutamine activates uridylyl-removing (UR) activity. Functionally, modifies, by uridylylation and deuridylylation, the PII regulatory proteins (GlnB and homologs), in response to the nitrogen status of the cell that GlnD senses through the glutamine level. Under low glutamine levels, catalyzes the conversion of the PII proteins and UTP to PII-UMP and PPi, while under higher glutamine levels, GlnD hydrolyzes PII-UMP to PII and UMP (deuridylylation). Thus, controls uridylylation state and activity of the PII proteins, and plays an important role in the regulation of nitrogen assimilation and metabolism. The protein is Bifunctional uridylyltransferase/uridylyl-removing enzyme of Thiobacillus denitrificans (strain ATCC 25259 / T1).